A 259-amino-acid polypeptide reads, in one-letter code: Protein GrpE (259 aa).

Disordered regions lie at residues 1 to 75 (MNSD…KGSD) and 227 to 259 (GPGPKAVNEEIPDQSASNQELSESVDGPTKDEN). The span at 20–40 (NNPSENFVSSSNSNESVNQVE) shows a compositional bias: low complexity. Residues 46–60 (EVEHQVKNDSVDTAK) show a composition bias toward basic and acidic residues. Residues 61-73 (EQSSTSCESNIKG) are compositionally biased toward polar residues.

Belongs to the GrpE family. Homodimer.

It is found in the cytoplasm. Its function is as follows. Participates actively in the response to hyperosmotic and heat shock by preventing the aggregation of stress-denatured proteins, in association with DnaK and GrpE. It is the nucleotide exchange factor for DnaK and may function as a thermosensor. Unfolded proteins bind initially to DnaJ; upon interaction with the DnaJ-bound protein, DnaK hydrolyzes its bound ATP, resulting in the formation of a stable complex. GrpE releases ADP from DnaK; ATP binding to DnaK triggers the release of the substrate protein, thus completing the reaction cycle. Several rounds of ATP-dependent interactions between DnaJ, DnaK and GrpE are required for fully efficient folding. This chain is Protein GrpE, found in Prochlorococcus marinus (strain NATL1A).